Reading from the N-terminus, the 343-residue chain is Tetraacyldisaccharide 4'-kinase (343 aa).

51–58 provides a ligand contact to ATP; that stretch reads TVGGAGKT.

This sequence belongs to the LpxK family.

It carries out the reaction a lipid A disaccharide + ATP = a lipid IVA + ADP + H(+). The protein operates within glycolipid biosynthesis; lipid IV(A) biosynthesis; lipid IV(A) from (3R)-3-hydroxytetradecanoyl-[acyl-carrier-protein] and UDP-N-acetyl-alpha-D-glucosamine: step 6/6. Its function is as follows. Transfers the gamma-phosphate of ATP to the 4'-position of a tetraacyldisaccharide 1-phosphate intermediate (termed DS-1-P) to form tetraacyldisaccharide 1,4'-bis-phosphate (lipid IVA). This chain is Tetraacyldisaccharide 4'-kinase, found in Xanthobacter autotrophicus (strain ATCC BAA-1158 / Py2).